Here is a 170-residue protein sequence, read N- to C-terminus: Cathelicidin antimicrobial peptide (170 aa).

The first 30 residues, 1–30 (MNTQWDSPSLGRWSLVLLLLGLVMPLAIVA), serve as a signal peptide directing secretion. Residues 31-131 (QVLSYQEAVL…DISCDKDKRK (101 aa)) constitute a propeptide, cathelin-like domain (CLD). 2 cysteine pairs are disulfide-bonded: cysteine 86–cysteine 97 and cysteine 108–cysteine 125. Positions 150-162 (LKNIGQRIKDFFG) are active core.

Belongs to the cathelicidin family. In terms of assembly, monomer, homodimer or homotrimer (in vitro). Oligomerizes as tetra- or hexamer in solution (in vitro). Proteolytically cleaved by proteinase PRTN3 into antibacterial peptide LL-37. Proteolytically cleaved by cathepsin CTSG and neutrophil elastase ELANE. In terms of processing, resistant to proteolytic degradation in solution, and when bound to both zwitterionic (mimicking mammalian membranes) and negatively charged membranes (mimicking bacterial membranes). Post-translationally, after secretion onto the skin surface, the CAMP gene product is processed by a serine protease-dependent mechanism into multiple novel antimicrobial peptides distinct from and shorter than cathelicidin LL-37. These peptides show enhanced antimicrobial action, acquiring the ability to kill skin pathogens such as S.aureus, E.coli and C.albicans. These peptides have lost the ability to stimulate CXCL8/IL8 release from keratinocytes. The peptides act synergistically, killing bacteria at lower concentrations when present together, and maintain activity at increased salt condition.

It is found in the secreted. The protein resides in the vesicle. Its function is as follows. Antimicrobial protein that is an integral component of the innate immune system. Binds to bacterial lipopolysaccharides (LPS). Acts via neutrophil N-formyl peptide receptors to enhance the release of CXCL2. Postsecretory processing generates multiple cathelicidin antimicrobial peptides with various lengths which act as a topical antimicrobial defense in sweat on skin. The unprocessed precursor form, cathelicidin antimicrobial peptide, inhibits the growth of Gram-negative E.coli and E.aerogenes with efficiencies comparable to that of the mature peptide LL-37 (in vitro). Antimicrobial peptide that is an integral component of the innate immune system. Binds to bacterial lipopolysaccharides (LPS). Causes membrane permeabilization by forming transmembrane pores (in vitro). Causes lysis of E.coli. Exhibits antimicrobial activity against Gram-negative bacteria such as P.aeruginosa, S.typhimurium, E.aerogenes, E.coli and P.syringae, Gram-positive bacteria such as L.monocytogenes, S.epidermidis, S.pyogenes and S.aureus, as well as vancomycin-resistant enterococci (in vitro). Exhibits antimicrobial activity against methicillin-resistant S.aureus, P.mirabilis, and C.albicans in low-salt media, but not in media containing 100 mM NaCl (in vitro). Forms chiral supramolecular assemblies with quinolone signal (PQS) molecules of P.aeruginosa, which may lead to interference of bacterial quorum signaling and perturbance of bacterial biofilm formation. May form supramolecular fiber-like assemblies on bacterial membranes. Induces cytokine and chemokine producation as well as TNF/TNFA and CSF2/GMCSF production in normal human keratinocytes. Exhibits hemolytic activity against red blood cells. In terms of biological role, exhibits antimicrobial activity against E.coli and B.megaterium (in vitro). The sequence is that of Cathelicidin antimicrobial peptide from Ateles fusciceps (Brown-headed spider monkey).